The following is a 131-amino-acid chain: Snaclec A13 (131 aa).

Intrachain disulfides connect C4/C15, C32/C125, and C100/C117. The C-type lectin domain occupies 11 to 126 (YEGHCYKVFN…CELAYHFICM (116 aa)).

This sequence belongs to the snaclec family. As to quaternary structure, heterodimer; disulfide-linked. In terms of tissue distribution, expressed by the venom gland.

It is found in the secreted. In terms of biological role, interferes with one step of hemostasis (modulation of platelet aggregation, or coagulation cascade, for example). This Macrovipera lebetinus (Levantine viper) protein is Snaclec A13.